A 154-amino-acid polypeptide reads, in one-letter code: Transcriptional repressor NrdR (154 aa).

Residues 1 to 22 (MRCPFCGNDDTQVKDSRPTEDN) are disordered. Residues 3–34 (CPFCGNDDTQVKDSRPTEDNSAIRRRRFCPAC) fold into a zinc finger. The segment covering 11 to 22 (TQVKDSRPTEDN) has biased composition (basic and acidic residues). Residues 49 to 139 (LTVVKSGGSR…VYKDFREVTD (91 aa)) form the ATP-cone domain.

This sequence belongs to the NrdR family. Zn(2+) serves as cofactor.

Functionally, negatively regulates transcription of bacterial ribonucleotide reductase nrd genes and operons by binding to NrdR-boxes. The sequence is that of Transcriptional repressor NrdR from Rhodospirillum centenum (strain ATCC 51521 / SW).